The sequence spans 225 residues: Riboflavin kinase (225 aa).

The unknown stretch occupies residues 1–89 (MPDIKYLKKL…SRIFSPDLDI (89 aa)). The segment at 90–225 (LELEGKVLKG…LKKQGTENQK (136 aa)) is riboflavin kinase. Residue 99–104 (GLGEGQ) participates in CDP binding. Mg(2+)-binding residues include T128 and N130. FMN-binding residues include T185 and E193. 198-201 (IKLR) serves as a coordination point for CDP.

This sequence belongs to the archaeal riboflavin kinase family. Mg(2+) serves as cofactor.

It catalyses the reaction riboflavin + CTP = CDP + FMN + H(+). It participates in cofactor biosynthesis; FMN biosynthesis; FMN from riboflavin (CTP route): step 1/1. Catalyzes the CTP-dependent phosphorylation of riboflavin (vitamin B2) to form flavin mononucleotide (FMN). This Methanosarcina barkeri (strain Fusaro / DSM 804) protein is Riboflavin kinase (ribK).